The primary structure comprises 182 residues: Ribosome-recycling factor (182 aa).

This sequence belongs to the RRF family.

It localises to the cytoplasm. Responsible for the release of ribosomes from messenger RNA at the termination of protein biosynthesis. May increase the efficiency of translation by recycling ribosomes from one round of translation to another. This chain is Ribosome-recycling factor, found in Picosynechococcus sp. (strain ATCC 27264 / PCC 7002 / PR-6) (Agmenellum quadruplicatum).